The chain runs to 346 residues: Phosphate acyltransferase (346 aa).

The protein belongs to the PlsX family. As to quaternary structure, homodimer. Probably interacts with PlsY.

The protein localises to the cytoplasm. The enzyme catalyses a fatty acyl-[ACP] + phosphate = an acyl phosphate + holo-[ACP]. It participates in lipid metabolism; phospholipid metabolism. Its function is as follows. Catalyzes the reversible formation of acyl-phosphate (acyl-PO(4)) from acyl-[acyl-carrier-protein] (acyl-ACP). This enzyme utilizes acyl-ACP as fatty acyl donor, but not acyl-CoA. This Geotalea daltonii (strain DSM 22248 / JCM 15807 / FRC-32) (Geobacter daltonii) protein is Phosphate acyltransferase.